Reading from the N-terminus, the 448-residue chain is Tubulin alpha chain (448 aa).

GTP-binding residues include Gln-12, Glu-73, Ser-142, Gly-146, Thr-147, Thr-181, Asn-208, and Asn-230. Glu-73 is a binding site for Mg(2+). Glu-256 is an active-site residue.

It belongs to the tubulin family. In terms of assembly, dimer of alpha and beta chains. A typical microtubule is a hollow water-filled tube with an outer diameter of 25 nm and an inner diameter of 15 nM. Alpha-beta heterodimers associate head-to-tail to form protofilaments running lengthwise along the microtubule wall with the beta-tubulin subunit facing the microtubule plus end conferring a structural polarity. Microtubules usually have 13 protofilaments but different protofilament numbers can be found in some organisms and specialized cells. It depends on Mg(2+) as a cofactor.

It is found in the cytoplasm. The protein resides in the cytoskeleton. It carries out the reaction GTP + H2O = GDP + phosphate + H(+). Tubulin is the major constituent of microtubules, a cylinder consisting of laterally associated linear protofilaments composed of alpha- and beta-tubulin heterodimers. Microtubules grow by the addition of GTP-tubulin dimers to the microtubule end, where a stabilizing cap forms. Below the cap, tubulin dimers are in GDP-bound state, owing to GTPase activity of alpha-tubulin. This Eremothecium gossypii (strain ATCC 10895 / CBS 109.51 / FGSC 9923 / NRRL Y-1056) (Yeast) protein is Tubulin alpha chain (TUB1).